Here is a 168-residue protein sequence, read N- to C-terminus: Outer-membrane lipoprotein YfiB (168 aa).

The first 25 residues, 1 to 25 (MLPQRLHPSRLLALALFSLVLGLAG), serve as a signal peptide directing secretion. Cys-26 carries N-palmitoyl cysteine lipidation. A lipid anchor (S-diacylglycerol cysteine) is attached at Cys-26. An OmpA-like domain is found at 53–168 (EGWEFGMSSK…RRVAIIVPAE (116 aa)).

This sequence belongs to the outer membrane OOP (TC 1.B.6) superfamily. In terms of assembly, homodimer. Interacts with YfiR. The YfiB-YfiR complex is a 2:2 heterotetramer.

It is found in the cell outer membrane. Its activity is regulated as follows. Both lipid anchor in the outer membrane and peptidoglycan binding are required for full activity. Once activated by certain cell stress, the dimeric YfiB transforms from a compact conformation to a stretched conformation, allowing the periplasmic domain of the membrane-anchored YfiB to penetrate the cell wall and sequester the YfiR dimer. GMP enhances the binding affinity between YfiB and YfiR. Its function is as follows. Activates the diguanylate cyclase TpbB/YfiN by sequestering YfiR at the outer membrane, which counteracts the YfiR-mediated repression of TpbB/YfiN at the inner membrane and leads to increased c-di-GMP production. May act as a sensor of envelope stress. In terms of biological role, part of the YfiB-TpbB-YfiR (or yfiBNR) system, encoding a tripartite signaling module that modulates intracellular c-di-GMP levels. The system is a key regulator of the small colony variant (SCV) phenotype, and plays an important role in biofilm formation and in vivo persistence. The c-di-GMP produced by TpbB/YfiN stimulates the production of the Pel and Psl exopolysaccharides, which promotes surface attachment, generates an SCV phenotype and confers resistance against phagocytosis. The chain is Outer-membrane lipoprotein YfiB from Pseudomonas aeruginosa (strain ATCC 15692 / DSM 22644 / CIP 104116 / JCM 14847 / LMG 12228 / 1C / PRS 101 / PAO1).